Consider the following 417-residue polypeptide: Serine hydroxymethyltransferase (417 aa).

Residues Leu121 and 125–127 (GHL) contribute to the (6S)-5,6,7,8-tetrahydrofolate site. At Lys229 the chain carries N6-(pyridoxal phosphate)lysine. 355–357 (SPF) contacts (6S)-5,6,7,8-tetrahydrofolate.

This sequence belongs to the SHMT family. In terms of assembly, homodimer. Requires pyridoxal 5'-phosphate as cofactor.

The protein resides in the cytoplasm. The catalysed reaction is (6R)-5,10-methylene-5,6,7,8-tetrahydrofolate + glycine + H2O = (6S)-5,6,7,8-tetrahydrofolate + L-serine. It participates in one-carbon metabolism; tetrahydrofolate interconversion. It functions in the pathway amino-acid biosynthesis; glycine biosynthesis; glycine from L-serine: step 1/1. Functionally, catalyzes the reversible interconversion of serine and glycine with tetrahydrofolate (THF) serving as the one-carbon carrier. This reaction serves as the major source of one-carbon groups required for the biosynthesis of purines, thymidylate, methionine, and other important biomolecules. Also exhibits THF-independent aldolase activity toward beta-hydroxyamino acids, producing glycine and aldehydes, via a retro-aldol mechanism. The sequence is that of Serine hydroxymethyltransferase from Klebsiella pneumoniae (strain 342).